The chain runs to 571 residues: Proline--tRNA ligase (571 aa).

Belongs to the class-II aminoacyl-tRNA synthetase family. ProS type 1 subfamily. As to quaternary structure, homodimer.

It localises to the cytoplasm. It catalyses the reaction tRNA(Pro) + L-proline + ATP = L-prolyl-tRNA(Pro) + AMP + diphosphate. In terms of biological role, catalyzes the attachment of proline to tRNA(Pro) in a two-step reaction: proline is first activated by ATP to form Pro-AMP and then transferred to the acceptor end of tRNA(Pro). As ProRS can inadvertently accommodate and process non-cognate amino acids such as alanine and cysteine, to avoid such errors it has two additional distinct editing activities against alanine. One activity is designated as 'pretransfer' editing and involves the tRNA(Pro)-independent hydrolysis of activated Ala-AMP. The other activity is designated 'posttransfer' editing and involves deacylation of mischarged Ala-tRNA(Pro). The misacylated Cys-tRNA(Pro) is not edited by ProRS. This Actinobacillus pleuropneumoniae serotype 5b (strain L20) protein is Proline--tRNA ligase.